The chain runs to 71 residues: MSQNSITSYKMGFAKHFFLFAVLLCATAMYSVAEPAQERLIESIACMQKGLPCMEHVDCCHGVCDSLFCLY.

Positions methionine 1–alanine 33 are cleaved as a signal peptide. A propeptide spanning residues glutamate 34–arginine 39 is cleaved from the precursor. Cystine bridges form between cysteine 46–cysteine 60, cysteine 53–cysteine 64, and cysteine 59–cysteine 69.

Expressed by the venom gland.

The protein resides in the secreted. Functionally, probable insect neurotoxin with ion channel impairing activity. Does not show activity on 45 human receptors from 9 families (5-hydroxytryptamine, adrenergic, dopamine, muscarinic, histamine, neurotransmitter, opioid, sigma, and gaba(A) receptors). In vivo, when mixed with U3-SYTX-Sth1a does not cause paralytic or lethal activity when injected into crickets. It is noteworthy that crickets are evolutionarily distant from prey species. This chain is U3-scytotoxin-Sth1h, found in Scytodes thoracica (Spitting spider).